The following is a 308-amino-acid chain: MDFASGLPIFIVTLREALEASLVVGIVLACLARAQQMQLKGWVYRGISAGVVASVLVGCLLAGVLQGVERLPGPYTPILKALLAALLGAIAVGMLSWMLLWMTKQARSLRGEIQGQINQAVEKEGGGKAIAIVVFIAVVREGFEMVLFLAAQQNMANPAAIGAALAGIGTAVVMAFLIFRLGVKLNLKLFFQVMGTLLLIIVGGLVIGVLKNLDLAVSMMGLANLGLGYLCFVPGDSCLLGPLLWNLAPWLPDNQFPGIVLKTLAGYRDHLYLFQAIAYGIFLSVIGSLYFRGLAGKGDAPQAVAQKS.

A run of 5 helical transmembrane segments spans residues 46 to 66 (GISA…GVLQ), 82 to 102 (LLAA…LLWM), 159 to 179 (AAIG…FLIF), 190 to 210 (FFQV…IGVL), and 271 to 291 (LYLF…SLYF).

Belongs to the oxidase-dependent Fe transporter (OFeT) (TC 9.A.10.1) family.

It is found in the cell membrane. This is an uncharacterized protein from Synechocystis sp. (strain ATCC 27184 / PCC 6803 / Kazusa).